The primary structure comprises 223 residues: Serine/threonine/tyrosine-interacting protein A (223 aa).

One can recognise a Tyrosine-protein phosphatase domain in the interval 28–176 (EMQEILPGLF…LQEYEAIYLA (149 aa)).

Belongs to the protein-tyrosine phosphatase family. Non-receptor class subfamily.

In terms of biological role, catalytically inactive phosphatase. This is Serine/threonine/tyrosine-interacting protein A (styx-a) from Xenopus laevis (African clawed frog).